We begin with the raw amino-acid sequence, 83 residues long: Small ribosomal subunit protein bS16 (83 aa).

The protein belongs to the bacterial ribosomal protein bS16 family.

This chain is Small ribosomal subunit protein bS16, found in Pseudomonas fluorescens (strain SBW25).